Consider the following 318-residue polypeptide: uncharacterized protein (318 aa).

It belongs to the glycosyltransferase 2 family.

This is an uncharacterized protein from Rickettsia prowazekii (strain Madrid E).